We begin with the raw amino-acid sequence, 366 residues long: GTP cyclohydrolase 1 type 2 homolog (366 aa).

The Zn(2+) site is built by H64, H65, D102, H326, and E329.

This sequence belongs to the GTP cyclohydrolase I type 2/NIF3 family. As to quaternary structure, homohexamer.

The sequence is that of GTP cyclohydrolase 1 type 2 homolog from Staphylococcus aureus (strain MSSA476).